The primary structure comprises 80 residues: Keratin-associated protein 6-1 (80 aa).

This sequence belongs to the KRTAP type 6 family. As to quaternary structure, interacts with hair keratins.

In the hair cortex, hair keratin intermediate filaments are embedded in an interfilamentous matrix, consisting of hair keratin-associated proteins (KRTAP), which are essential for the formation of a rigid and resistant hair shaft through their extensive disulfide bond cross-linking with abundant cysteine residues of hair keratins. The matrix proteins include the high-sulfur and high-glycine-tyrosine keratins. The protein is Keratin-associated protein 6-1 (KRTAP6-1) of Oryctolagus cuniculus (Rabbit).